The primary structure comprises 93 residues: Large ribosomal subunit protein uL23cz/uL23cy (93 aa).

It belongs to the universal ribosomal protein uL23 family. As to quaternary structure, part of the 50S ribosomal subunit.

It is found in the plastid. Its subcellular location is the chloroplast. Functionally, binds to 23S rRNA. This chain is Large ribosomal subunit protein uL23cz/uL23cy (rpl23-A), found in Nymphaea alba (White water-lily).